Reading from the N-terminus, the 458-residue chain is MPQKLYIETFGCQMNEYDSAKMRDLLEVSDSFELARSPEEADVLLLNTCSIRDKAQEKVFSQLGRWRPIKLRRPEVVIGVGGCVASQEGEALQKRAPYVDIVFGPQTLHRLPSMLEQVRCERRPVVDVSFPAIEKFDALPEPRADGPKAFVSVMEGCGKYCTFCVVPYTRGEEISRPVDDVIAEIVALAEQGVREVNLLGQNVNAYRGVLADGGMADLALLMHYVAAVDGIDRIRFTTSHPVEFSDALIEAFRDIPQLVSHLHLPVQSGSDRILRLMKRGHTRAEYMAKVAKLREIRPDLSLSSDFIVGFPGETDEDFEDTMALIEQLGFDQSFSFIFSARPGTPAAAMADDVPPETKRARLARLQAKIADNAAKIGASMVGSIQSVLVEGTSRKNFNELSGRTENNRVVNFAGHPRLIGQFVDVVITESLPNSLRGRLIGVAHESDFISPDSTAQIA.

Residues 3-120 (QKLYIETFGC…LPSMLEQVRC (118 aa)) enclose the MTTase N-terminal domain. [4Fe-4S] cluster-binding residues include C12, C49, C83, C157, C161, and C164. Residues 143–375 (RADGPKAFVS…QAKIADNAAK (233 aa)) enclose the Radical SAM core domain. Positions 378-441 (ASMVGSIQSV…PNSLRGRLIG (64 aa)) constitute a TRAM domain.

The protein belongs to the methylthiotransferase family. MiaB subfamily. As to quaternary structure, monomer. The cofactor is [4Fe-4S] cluster.

The protein resides in the cytoplasm. The catalysed reaction is N(6)-dimethylallyladenosine(37) in tRNA + (sulfur carrier)-SH + AH2 + 2 S-adenosyl-L-methionine = 2-methylsulfanyl-N(6)-dimethylallyladenosine(37) in tRNA + (sulfur carrier)-H + 5'-deoxyadenosine + L-methionine + A + S-adenosyl-L-homocysteine + 2 H(+). In terms of biological role, catalyzes the methylthiolation of N6-(dimethylallyl)adenosine (i(6)A), leading to the formation of 2-methylthio-N6-(dimethylallyl)adenosine (ms(2)i(6)A) at position 37 in tRNAs that read codons beginning with uridine. The protein is tRNA-2-methylthio-N(6)-dimethylallyladenosine synthase of Methylococcus capsulatus (strain ATCC 33009 / NCIMB 11132 / Bath).